The primary structure comprises 109 residues: Large ribosomal subunit protein uL22 (109 aa).

Belongs to the universal ribosomal protein uL22 family. In terms of assembly, part of the 50S ribosomal subunit.

Its function is as follows. This protein binds specifically to 23S rRNA; its binding is stimulated by other ribosomal proteins, e.g. L4, L17, and L20. It is important during the early stages of 50S assembly. It makes multiple contacts with different domains of the 23S rRNA in the assembled 50S subunit and ribosome. In terms of biological role, the globular domain of the protein is located near the polypeptide exit tunnel on the outside of the subunit, while an extended beta-hairpin is found that lines the wall of the exit tunnel in the center of the 70S ribosome. This chain is Large ribosomal subunit protein uL22, found in Paraburkholderia xenovorans (strain LB400).